Consider the following 524-residue polypeptide: RNA-splicing ligase RtcB homolog 2 (524 aa).

Aspartate 141, cysteine 144, histidine 249, histidine 281, and histidine 372 together coordinate Mn(2+). 248-252 (NHYLE) contributes to the GMP binding site. Residues 372–373 (HN), 421–424 (GGSM), serine 428, 447–450 (HGAG), and lysine 523 each bind GMP. Histidine 447 functions as the GMP-histidine intermediate in the catalytic mechanism.

The protein belongs to the RtcB family. In terms of assembly, catalytic component of the tRNA-splicing ligase complex. The cofactor is Mn(2+).

It catalyses the reaction a 3'-end 3'-phospho-ribonucleotide-RNA + a 5'-end dephospho-ribonucleoside-RNA + GTP = a ribonucleotidyl-ribonucleotide-RNA + GMP + diphosphate. The catalysed reaction is a 3'-end 2',3'-cyclophospho-ribonucleotide-RNA + a 5'-end dephospho-ribonucleoside-RNA + GTP + H2O = a ribonucleotidyl-ribonucleotide-RNA + GMP + diphosphate + H(+). In terms of biological role, catalytic subunit of the tRNA-splicing ligase complex that acts by directly joining spliced tRNA halves to mature-sized tRNAs by incorporating the precursor-derived splice junction phosphate into the mature tRNA as a canonical 3',5'-phosphodiester. May act as an RNA ligase with broad substrate specificity, and may function toward other RNAs. The chain is RNA-splicing ligase RtcB homolog 2 from Entamoeba dispar (strain ATCC PRA-260 / SAW760).